Reading from the N-terminus, the 231-residue chain is tRNA (guanine-N(1)-)-methyltransferase (231 aa).

Residues G111 and L131–L136 each bind S-adenosyl-L-methionine.

This sequence belongs to the RNA methyltransferase TrmD family. As to quaternary structure, homodimer.

It localises to the cytoplasm. It carries out the reaction guanosine(37) in tRNA + S-adenosyl-L-methionine = N(1)-methylguanosine(37) in tRNA + S-adenosyl-L-homocysteine + H(+). Functionally, specifically methylates guanosine-37 in various tRNAs. The protein is tRNA (guanine-N(1)-)-methyltransferase of Leptospira interrogans serogroup Icterohaemorrhagiae serovar copenhageni (strain Fiocruz L1-130).